The following is a 291-amino-acid chain: Transcription factor TYE7 (291 aa).

Residues 89–109 (FPTDQFFSNPSSYSHSPEVSS) form a disordered region. A compositionally biased stretch (low complexity) spans 96–109 (SNPSSYSHSPEVSS). S104 is modified (phosphoserine). The 86-residue stretch at 180-265 (FQKQAHNKIE…EKAVDYILYL (86 aa)) folds into the bHLH domain. DNA contacts are provided by H185, E189, and R193. The segment at 221–245 (DSVKKQDEDGAETAATTPLPSAAAT) is disordered. Low complexity predominate over residues 233–245 (TAATTPLPSAAAT). At T237 the chain carries Phosphothreonine.

Homodimer. Efficient DNA binding requires dimerization with another bHLH protein.

It is found in the nucleus. In terms of biological role, transcriptional activator of glycolytic gene expression, such as enolase genes (ENO1 and ENO2), glyceraldehyde-3-phosphate dehydrogenase gene (TDH), phosphoglycerate kinase (PGK1), phosphoglycerate mutase (PGM1), pyruvate kinase (PYK1) and triosephosphate isomerase (TPI1) genes. Binds DNA on E-box motifs: 5'-CANNTG-3'. In response to adenylic nucleotide reduction, activates Ty1 mRNA transcription, possibly by controlling Ty1 antisense transcription. Acts as a cell cycle transcription factor. Its function may also be linked to sulfur metabolism and the cross-regulation between phosphate and sulfate metabolism. This chain is Transcription factor TYE7, found in Saccharomyces cerevisiae (strain ATCC 204508 / S288c) (Baker's yeast).